Here is a 358-residue protein sequence, read N- to C-terminus: tRNA-specific 2-thiouridylase MnmA (358 aa).

Residues 6-13 (ALSGGVDS) and M32 contribute to the ATP site. C103 (nucleophile) is an active-site residue. A disulfide bridge connects residues C103 and C201. G127 serves as a coordination point for ATP. Residues 151–153 (KDQ) form an interaction with tRNA region. Residue C201 is the Cysteine persulfide intermediate of the active site.

It belongs to the MnmA/TRMU family.

Its subcellular location is the cytoplasm. It carries out the reaction S-sulfanyl-L-cysteinyl-[protein] + uridine(34) in tRNA + AH2 + ATP = 2-thiouridine(34) in tRNA + L-cysteinyl-[protein] + A + AMP + diphosphate + H(+). Its function is as follows. Catalyzes the 2-thiolation of uridine at the wobble position (U34) of tRNA, leading to the formation of s(2)U34. This is tRNA-specific 2-thiouridylase MnmA from Thermotoga sp. (strain RQ2).